Reading from the N-terminus, the 353-residue chain is Sorbitol dehydrogenase (353 aa).

Cysteine 45 contacts Zn(2+). Substrate is bound at residue tyrosine 51. Residues histidine 70 and glutamate 71 each contribute to the Zn(2+) site. Glutamate 156 is a binding site for substrate. NAD(+) contacts are provided by residues valine 184, aspartate 204, arginine 209, valine 271 to leucine 273, and isoleucine 296 to arginine 298. 2 residues coordinate substrate: arginine 298 and tyrosine 299.

The protein belongs to the zinc-containing alcohol dehydrogenase family. As to quaternary structure, homotetramer. Zn(2+) serves as cofactor.

It carries out the reaction keto-D-fructose + NADH + H(+) = D-sorbitol + NAD(+). The catalysed reaction is xylitol + NAD(+) = D-xylulose + NADH + H(+). The enzyme catalyses L-iditol + NAD(+) = keto-L-sorbose + NADH + H(+). Functionally, polyol dehydrogenase that catalyzes the NAD(+)-dependent oxidation of various sugar alcohols. Is mostly active with D-sorbitol (D-glucitol), xylitol and L-iditol as substrates, leading to the C2-oxidized products D-fructose, D-xylulose and L-sorbose, respectively. In Bacillus subtilis (strain 168), this protein is Sorbitol dehydrogenase.